Reading from the N-terminus, the 617-residue chain is Sodium-dependent noradrenaline transporter (617 aa).

The segment at 1 to 23 is disordered; that stretch reads MLLARMNPQVQPENNGADTGPEQ. Residues 1 to 62 lie on the Cytoplasmic side of the membrane; sequence MLLARMNPQV…AQPRETWGKK (62 aa). The span at 8–17 shows a compositional bias: polar residues; it reads PQVQPENNGA. Residues 63-88 form a helical membrane-spanning segment; it reads IDFLLSVVGFAVDLANVWRFPYLCYK. 3 residues coordinate Na(+): G71, A73, and V74. D75 is a binding site for (R)-noradrenaline. Dopamine is bound at residue D75. Position 78 (N78) interacts with Na(+). The (R)-noradrenaline site is built by Y87 and K88. Topologically, residues 89 to 92 are extracellular; sequence NGGG. Residues 93-116 traverse the membrane as a helical segment; sequence AFLIPYTLFLIIAGMPLFYMELAL. The Cytoplasmic portion of the chain corresponds to 117-135; the sequence is GQYNREGAATVWKICPFFK. A helical membrane pass occupies residues 136–166; sequence GVGYAVILIALYVGFYYNVIIAWSLYYLFSS. Positions 145 and 149 each coordinate (R)-noradrenaline. Residue A145 coordinates dopamine. At 167–233 the chain is on the extracellular side; the sequence is FTLNLPWTDC…SSGIHDIGLP (67 aa). C176 and C185 are oxidised to a cystine. 3 N-linked (GlcNAc...) asparagine glycosylation sites follow: N184, N192, and N198. Residues 234 to 254 form a helical membrane-spanning segment; that stretch reads QWQLLLCLMVVVIVLYFSLWK. At 255–257 the chain is on the cytoplasmic side; sequence GVK. A helical transmembrane segment spans residues 258–282; it reads TSGKVVWITATLPYFVLFVLLVHGV. The Extracellular portion of the chain corresponds to 283–306; it reads TLPGASNGINAYLHIDFYRLKEAT. The helical transmembrane segment at 307–332 threads the bilayer; sequence VWIDAATQIFFSLGAGFGVLIAFASY. F317 lines the (R)-noradrenaline pocket. F317 contacts dopamine. S318 contributes to the Na(+) binding site. The Cytoplasmic segment spans residues 333-338; it reads NKFDNN. Residues 339–362 form a helical membrane-spanning segment; the sequence is CYRDALLTSSINCITSFVSGFAIF. Residue N350 participates in Na(+) binding. Topologically, residues 363–402 are extracellular; that stretch reads SILGYMAHEHKVNIEDVATEGAGLVFILYPEAISTLSGST. E382 contributes to the (R)-noradrenaline binding site. E382 provides a ligand contact to dopamine. Residues 403 to 428 form a helical membrane-spanning segment; sequence FWAVVFFVMLLALGLDSSMGGMEAVI. Residues D418 and S419 each contribute to the Na(+) site. Over 429–443 the chain is Cytoplasmic; it reads TGLADDFQVLKRHRK. A helical membrane pass occupies residues 444–464; sequence LFTFGVTFSTFLLALFCITKG. Residue G465 is a topological domain, extracellular. Residues 466-492 form a helical membrane-spanning segment; it reads IYVLTLLDTFAAGTSILFAVLMEAIGV. At 493–522 the chain is on the cytoplasmic side; it reads SWFYGVDRFSNDIQQMMGFRPGLYWRLCWK. The helical transmembrane segment at 523-545 threads the bilayer; the sequence is FVSPAFLLFVVVVSIINFKPLTY. Over 546–548 the chain is Extracellular; the sequence is DDY. A helical membrane pass occupies residues 549–569; it reads IFPPWANWVGWGIALSSMVLV. Topologically, residues 570–617 are cytoplasmic; it reads PIYVIYKFLSTQGSLWERLAYGITPENEHHLVAQRDIRQFQLQHWLAI.

It belongs to the sodium:neurotransmitter symporter (SNF) (TC 2.A.22) family. SLC6A2 subfamily. Monomer. Can form homodimers in the cell membrane; homodimerization is mostly mediated by cholesterol and lipids, and regulates neurotransmitter transport activity. Interacts with PRKCABP. In terms of processing, palmitoylated; palmitoylation regulates protein levels and neurotransmitter transport.

The protein localises to the cell membrane. It localises to the cell projection. Its subcellular location is the axon. It is found in the synapse. The protein resides in the synaptosome. The enzyme catalyses (R)-noradrenaline(out) + chloride(out) + Na(+)(out) = (R)-noradrenaline(in) + chloride(in) + Na(+)(in). The catalysed reaction is dopamine(out) + chloride(out) + Na(+)(out) = dopamine(in) + chloride(in) + Na(+)(in). It catalyses the reaction dopamine(out) + chloride(out) + 2 Na(+)(out) = dopamine(in) + chloride(in) + 2 Na(+)(in). With respect to regulation, inhibited by mazindol, desipramine, nomifensine and nortriptyline. Mediates sodium- and chloride-dependent transport of norepinephrine (also known as noradrenaline), the primary signaling neurotransmitter in the autonomic sympathetic nervous system. Is responsible for norepinephrine re-uptake and clearance from the synaptic cleft, thus playing a crucial role in norepinephrine inactivation and homeostasis. Can also mediate sodium- and chloride-dependent transport of dopamine. This chain is Sodium-dependent noradrenaline transporter, found in Homo sapiens (Human).